A 331-amino-acid chain; its full sequence is Biotin synthase (331 aa).

Positions 51 to 278 (QTIQLSTLMS…KSYVRLSAGR (228 aa)) constitute a Radical SAM core domain. Residues C66, C70, and C73 each contribute to the [4Fe-4S] cluster site. Residues C110, C141, C201, and R273 each coordinate [2Fe-2S] cluster.

Belongs to the radical SAM superfamily. Biotin synthase family. Homodimer. [4Fe-4S] cluster serves as cofactor. Requires [2Fe-2S] cluster as cofactor.

The enzyme catalyses (4R,5S)-dethiobiotin + (sulfur carrier)-SH + 2 reduced [2Fe-2S]-[ferredoxin] + 2 S-adenosyl-L-methionine = (sulfur carrier)-H + biotin + 2 5'-deoxyadenosine + 2 L-methionine + 2 oxidized [2Fe-2S]-[ferredoxin]. The protein operates within cofactor biosynthesis; biotin biosynthesis; biotin from 7,8-diaminononanoate: step 2/2. In terms of biological role, catalyzes the conversion of dethiobiotin (DTB) to biotin by the insertion of a sulfur atom into dethiobiotin via a radical-based mechanism. The protein is Biotin synthase of Histophilus somni (strain 129Pt) (Haemophilus somnus).